The sequence spans 248 residues: Short-chain dehydrogenase/reductase iacG (248 aa).

NADP(+) is bound by residues isoleucine 14, asparagine 35, lysine 41, aspartate 58, arginine 120, and valine 187.

Belongs to the short-chain dehydrogenases/reductases (SDR) family.

The protein operates within secondary metabolite biosynthesis. Short-chain dehydrogenase/reductase; part of the gene cluster that mediates the biosynthesis of iso-A82775C, a enylepoxycyclohexane and biosynthetic precursor of the chloropestolide anticancer natural products. Within the cluster, the prenyltransferase iacE prenylates siccayne to generate pestalodiol E, using dimethylallyl diphosphate (DMAPP) as cosubstrate. The probable oxidoreductase iacF is then involved in the epoxidation of pestalodiol F to pestalodiol F, which is further converted to pestalofone A by the short-chain dehydrogenase/reductase iacG. Iso-A82775C is subsequently generated from pestalofone A by the short-chain dehydrogenase/reductase iacC. Iso-A82775C is further condensed with maldoxin via a Diels-Alder reaction to produce the anticancer natural products chloropestolides A to E. The polypeptide is Short-chain dehydrogenase/reductase iacG (Pestalotiopsis fici (strain W106-1 / CGMCC3.15140)).